The chain runs to 234 residues: MIDLWPAIDLINSTSVRLTEGKYDSKEKMEKSVEDSIRFYSQFKCVKRIHIVDLIGAKAKEVKEFDYIRSLRKLTTKPIEVGGGIRSKQTIENYIHSGIDYCIVGTKGIQDIEWLTHMTHQFPNKLYLSVDAFGEKIKINGWKEDAKLNLFDYVAKIEHLPLGGVIYTDISKDGKLSGPNFDLTGRLALYTSLPVIASGGIRHQEDLFRLESLNVHAAIVGKAAHLDEFWEGLS.

The Proton acceptor role is filled by aspartate 9. The active-site Proton donor is aspartate 131.

The protein belongs to the HisA/HisF family.

The protein resides in the cytoplasm. It catalyses the reaction 1-(5-phospho-beta-D-ribosyl)-5-[(5-phospho-beta-D-ribosylamino)methylideneamino]imidazole-4-carboxamide = 5-[(5-phospho-1-deoxy-D-ribulos-1-ylimino)methylamino]-1-(5-phospho-beta-D-ribosyl)imidazole-4-carboxamide. Its pathway is amino-acid biosynthesis; L-histidine biosynthesis; L-histidine from 5-phospho-alpha-D-ribose 1-diphosphate: step 4/9. This is 1-(5-phosphoribosyl)-5-[(5-phosphoribosylamino)methylideneamino] imidazole-4-carboxamide isomerase from Staphylococcus epidermidis (strain ATCC 35984 / DSM 28319 / BCRC 17069 / CCUG 31568 / BM 3577 / RP62A).